Consider the following 169-residue polypeptide: Ribosome maturation factor RimM (169 aa).

The region spanning 94–166 is the PRC barrel domain; the sequence is EEGFYDHELE…TATITPPDGL (73 aa).

It belongs to the RimM family. As to quaternary structure, binds ribosomal protein uS19.

The protein resides in the cytoplasm. An accessory protein needed during the final step in the assembly of 30S ribosomal subunit, possibly for assembly of the head region. Essential for efficient processing of 16S rRNA. May be needed both before and after RbfA during the maturation of 16S rRNA. It has affinity for free ribosomal 30S subunits but not for 70S ribosomes. The chain is Ribosome maturation factor RimM from Corynebacterium efficiens (strain DSM 44549 / YS-314 / AJ 12310 / JCM 11189 / NBRC 100395).